Consider the following 260-residue polypeptide: Phosphatidate cytidylyltransferase (260 aa).

7 consecutive transmembrane segments (helical) span residues 9-29, 46-66, 70-90, 102-122, 130-150, 172-192, and 196-216; these read IIALLIFLPILLMGGTTLMLF, MIKLISVPGIFSALALIIIML, AGDWVSNIQLKSLIAMSFILL, FMDAAFCLMSVAYVGIGFMYF, LHYILYAFLVVWLTDTGAYIF, FIGGLICSLIVPIVMLFFVDF, and IWLLLLVTIILSIFGQLGDLV.

It belongs to the CDS family.

It localises to the cell membrane. It carries out the reaction a 1,2-diacyl-sn-glycero-3-phosphate + CTP + H(+) = a CDP-1,2-diacyl-sn-glycerol + diphosphate. It participates in phospholipid metabolism; CDP-diacylglycerol biosynthesis; CDP-diacylglycerol from sn-glycerol 3-phosphate: step 3/3. The polypeptide is Phosphatidate cytidylyltransferase (cdsA) (Staphylococcus haemolyticus (strain JCSC1435)).